Here is a 1134-residue protein sequence, read N- to C-terminus: Mediator of RNA polymerase II transcription subunit 12 (1134 aa).

This sequence belongs to the Mediator complex subunit 12 family. As to quaternary structure, component of the srb8-11 complex which consists of rb8, srb9(TRAP240), srb10 and srb11. The srb8-11 complex associates with the Mediator complex thereby blocking association with RNA polymerase II and leading to reduced transcriptional activation by Mediator.

It localises to the nucleus. Its function is as follows. Component of the srb8-11 complex. The srb8-11 complex is a regulatory module of the Mediator complex which is itself involved in regulation of basal and activated RNA polymerase II-dependent transcription. The srb8-11 complex may be involved in the transcriptional repression of a subset of genes regulated by Mediator. It may inhibit the association of the Mediator complex with RNA polymerase II to form the holoenzyme complex. This chain is Mediator of RNA polymerase II transcription subunit 12 (srb8), found in Schizosaccharomyces pombe (strain 972 / ATCC 24843) (Fission yeast).